Here is a 1462-residue protein sequence, read N- to C-terminus: Gag-Pro-Pol polyprotein (1462 aa).

Residue Gly2 is the site of N-myristoyl glycine; by host attachment. Residues 93-143 (QIPSHPAPPPPSSPTHDPPDSDPQIPPPYVEPTAPQVLPVMHPHGVPPTHR) form a disordered region. Ser105 bears the Phosphoserine; by host MAPK1 mark. Positions 118-121 (PPPY) match the PPXY motif motif. The PTAP/PSAP motif signature appears at 124–127 (PTAP). 2 CCHC-type zinc fingers span residues 355–372 (QPCF…DCAQ) and 378–395 (GPCP…DCPR). A Peptidase A2 domain is found at 476-554 (IEALLDTGAD…NNWAIIGRDA (79 aa)). The active-site For protease activity; shared with dimeric partner is Asp481. Residues 614–804 (LEAGHIEPYT…GTIKFLGQII (191 aa)) form the Reverse transcriptase domain. Residues Asp680, Asp755, Asp756, Asp1040, Glu1074, Asp1096, Asp1157, Asp1230, and Asp1287 each contribute to the Mg(2+) site. Residues 1031-1165 (INTAPCLFSD…TDALLITPIL (135 aa)) enclose the RNase H type-1 domain. The Integrase catalytic domain maps to 1219–1388 (RGLLPNHIWQ…QPIPETHSLI (170 aa)). The segment at residues 1393–1443 (HWYYFKLPGLNSRQWKGPQEALQEAAGAALIPVSANSAQWIPWRLLKQAAC) is a DNA-binding region (integrase-type).

Homodimer; the homodimers are part of the immature particles. Interacts with human TSG101 and NEDD4; these interactions are essential for budding and release of viral particles. As to quaternary structure, homodimer; further assembles as homohexamers. Mg(2+) serves as cofactor. Phosphorylation of the matrix protein p19 by MAPK1 seems to play a role in budding. In terms of processing, myristoylated. Myristoylation of the matrix (MA) domain mediates the transport and binding of Gag polyproteins to the host plasma membrane and is required for the assembly of viral particles. Post-translationally, specific enzymatic cleavages by the viral protease yield mature proteins. The polyprotein is cleaved during and after budding, this process is termed maturation. The protease is autoproteolytically processed at its N- and C-termini.

Its subcellular location is the virion. It carries out the reaction Endonucleolytic cleavage to 5'-phosphomonoester.. The enzyme catalyses DNA(n) + a 2'-deoxyribonucleoside 5'-triphosphate = DNA(n+1) + diphosphate. Its function is as follows. The matrix domain targets Gag, Gag-Pro and Gag-Pro-Pol polyproteins to the plasma membrane via a multipartite membrane binding signal, that includes its myristoylated N-terminus. In terms of biological role, matrix protein. Functionally, forms the spherical core of the virus that encapsulates the genomic RNA-nucleocapsid complex. Binds strongly to viral nucleic acids and promote their aggregation. Also destabilizes the nucleic acids duplexes via highly structured zinc-binding motifs. Its function is as follows. The aspartyl protease mediates proteolytic cleavages of Gag and Gag-Pol polyproteins during or shortly after the release of the virion from the plasma membrane. Cleavages take place as an ordered, step-wise cascade to yield mature proteins. This process is called maturation. Displays maximal activity during the budding process just prior to particle release from the cell (Potential). Cleaves the translation initiation factor eIF4G leading to the inhibition of host cap-dependent translation. In terms of biological role, RT is a multifunctional enzyme that converts the viral RNA genome into dsDNA in the cytoplasm, shortly after virus entry into the cell. This enzyme displays a DNA polymerase activity that can copy either DNA or RNA templates, and a ribonuclease H (RNase H) activity that cleaves the RNA strand of RNA-DNA heteroduplexes in a partially processive 3' to 5'-endonucleasic mode. Conversion of viral genomic RNA into dsDNA requires many steps. A tRNA-Pro binds to the primer-binding site (PBS) situated at the 5'-end of the viral RNA. RT uses the 3' end of the tRNA primer to perform a short round of RNA-dependent minus-strand DNA synthesis. The reading proceeds through the U5 region and ends after the repeated (R) region which is present at both ends of viral RNA. The portion of the RNA-DNA heteroduplex is digested by the RNase H, resulting in a ssDNA product attached to the tRNA primer. This ssDNA/tRNA hybridizes with the identical R region situated at the 3' end of viral RNA. This template exchange, known as minus-strand DNA strong stop transfer, can be either intra- or intermolecular. RT uses the 3' end of this newly synthesized short ssDNA to perform the RNA-dependent minus-strand DNA synthesis of the whole template. RNase H digests the RNA template except for a polypurine tract (PPT) situated at the 5' end of the genome. It is not clear if both polymerase and RNase H activities are simultaneous. RNase H probably can proceed both in a polymerase-dependent (RNA cut into small fragments by the same RT performing DNA synthesis) and a polymerase-independent mode (cleavage of remaining RNA fragments by free RTs). Secondly, RT performs DNA-directed plus-strand DNA synthesis using the PPT that has not been removed by RNase H as primer. PPT and tRNA primers are then removed by RNase H. The 3' and 5' ssDNA PBS regions hybridize to form a circular dsDNA intermediate. Strand displacement synthesis by RT to the PBS and PPT ends produces a blunt ended, linear dsDNA copy of the viral genome that includes long terminal repeats (LTRs) at both ends. Functionally, catalyzes viral DNA integration into the host chromosome, by performing a series of DNA cutting and joining reactions. This Homo sapiens (Human) protein is Gag-Pro-Pol polyprotein (gag-pro-pol).